A 144-amino-acid polypeptide reads, in one-letter code: Major allergen Blo t 12 (144 aa).

Residues 1 to 20 (MKSVLIFLVAIALFSANIVS) form the signal peptide. A disordered region spans residues 24–77 (QTTRGRHTEPDDHHEKPTTQCTHEETTSTQHHHEEVVTTQTPHHEEKTTTEETH). The Chitin-binding type-2 domain maps to 92 to 144 (HVVCHEEGPIHIQEMCNKYIICSKSGSLWYITVMPCSIGTKFDPISRNCVLDN). A disulfide bond links cysteine 127 and cysteine 140.

This Blomia tropicalis (Mite) protein is Major allergen Blo t 12.